The sequence spans 94 residues: Acylphosphatase (94 aa).

One can recognise an Acylphosphatase-like domain in the interval 8–94 (HIRAWVSGKV…ETPPLGFEVC (87 aa)). Active-site residues include R23 and N41.

It belongs to the acylphosphatase family.

The enzyme catalyses an acyl phosphate + H2O = a carboxylate + phosphate + H(+). In Hahella chejuensis (strain KCTC 2396), this protein is Acylphosphatase (acyP).